The following is a 283-amino-acid chain: ATP synthase gamma chain (283 aa).

Belongs to the ATPase gamma chain family. F-type ATPases have 2 components, CF(1) - the catalytic core - and CF(0) - the membrane proton channel. CF(1) has five subunits: alpha(3), beta(3), gamma(1), delta(1), epsilon(1). CF(0) has three main subunits: a, b and c.

It localises to the cell inner membrane. In terms of biological role, produces ATP from ADP in the presence of a proton gradient across the membrane. The gamma chain is believed to be important in regulating ATPase activity and the flow of protons through the CF(0) complex. The chain is ATP synthase gamma chain from Ehrlichia ruminantium (strain Gardel).